The sequence spans 187 residues: Nicotinamide-nucleotide adenylyltransferase (187 aa).

This sequence belongs to the archaeal NMN adenylyltransferase family.

It localises to the cytoplasm. The enzyme catalyses beta-nicotinamide D-ribonucleotide + ATP + H(+) = diphosphate + NAD(+). It functions in the pathway cofactor biosynthesis; NAD(+) biosynthesis; NAD(+) from nicotinamide D-ribonucleotide: step 1/1. The sequence is that of Nicotinamide-nucleotide adenylyltransferase from Thermococcus onnurineus (strain NA1).